The sequence spans 32 residues: uncharacterized protein (32 aa).

This is an uncharacterized protein from Saccharomyces cerevisiae (strain ATCC 204508 / S288c) (Baker's yeast).